Consider the following 511-residue polypeptide: D-alanine--D-alanyl carrier protein ligase (511 aa).

Thr152–Ser153 contacts ATP. A D-alanine-binding site is contributed by Asp199. Asn294–Thr299 is a binding site for ATP. Val303 is a D-alanine binding site. Residues Asp385, Tyr397–Arg400, and Lys499 contribute to the ATP site. D-alanine is bound at residue Lys499.

The protein belongs to the ATP-dependent AMP-binding enzyme family. DltA subfamily.

The protein localises to the cytoplasm. The enzyme catalyses holo-[D-alanyl-carrier protein] + D-alanine + ATP = D-alanyl-[D-alanyl-carrier protein] + AMP + diphosphate. The protein operates within cell wall biogenesis; lipoteichoic acid biosynthesis. Functionally, catalyzes the first step in the D-alanylation of lipoteichoic acid (LTA), the activation of D-alanine and its transfer onto the D-alanyl carrier protein (Dcp) DltC. In an ATP-dependent two-step reaction, forms a high energy D-alanyl-AMP intermediate, followed by transfer of the D-alanyl residue as a thiol ester to the phosphopantheinyl prosthetic group of the Dcp. D-alanylation of LTA plays an important role in modulating the properties of the cell wall in Gram-positive bacteria, influencing the net charge of the cell wall. This is D-alanine--D-alanyl carrier protein ligase from Streptococcus agalactiae serotype III (strain NEM316).